Here is a 324-residue protein sequence, read N- to C-terminus: Probable nicotianamine synthase 4 (324 aa).

This sequence belongs to the nicotianamine synthase (NAS)-like family.

It catalyses the reaction 3 S-adenosyl-L-methionine = nicotianamine + 3 S-methyl-5'-thioadenosine + 3 H(+). In terms of biological role, synthesizes nicotianamine, a polyamine which serves as a sensor for the physiological iron status within the plant, and/or might be involved in the transport of iron. The protein is Probable nicotianamine synthase 4 (NAS4) of Arabidopsis thaliana (Mouse-ear cress).